A 469-amino-acid chain; its full sequence is tRNA-2-methylthio-N(6)-dimethylallyladenosine synthase (469 aa).

The MTTase N-terminal domain maps to Arg-22 to Glu-142. [4Fe-4S] cluster contacts are provided by Cys-31, Cys-67, Cys-105, Cys-183, Cys-187, and Cys-190. The region spanning Arg-169–Glu-401 is the Radical SAM core domain. Residues Glu-404–Glu-466 enclose the TRAM domain.

This sequence belongs to the methylthiotransferase family. MiaB subfamily. In terms of assembly, monomer. The cofactor is [4Fe-4S] cluster.

Its subcellular location is the cytoplasm. It catalyses the reaction N(6)-dimethylallyladenosine(37) in tRNA + (sulfur carrier)-SH + AH2 + 2 S-adenosyl-L-methionine = 2-methylsulfanyl-N(6)-dimethylallyladenosine(37) in tRNA + (sulfur carrier)-H + 5'-deoxyadenosine + L-methionine + A + S-adenosyl-L-homocysteine + 2 H(+). In terms of biological role, catalyzes the methylthiolation of N6-(dimethylallyl)adenosine (i(6)A), leading to the formation of 2-methylthio-N6-(dimethylallyl)adenosine (ms(2)i(6)A) at position 37 in tRNAs that read codons beginning with uridine. The chain is tRNA-2-methylthio-N(6)-dimethylallyladenosine synthase from Rhizobium leguminosarum bv. trifolii (strain WSM2304).